A 1121-amino-acid chain; its full sequence is Putative ATP-dependent RNA helicase ECM32 (1121 aa).

Positions Asn-157 to Lys-187 are disordered. Basic residues predominate over residues Arg-160–Lys-184. A Phosphoserine modification is found at Ser-227. Positions Ala-233–Lys-452 are disordered. Residues Asn-251–Asn-263 are compositionally biased toward basic residues. A compositionally biased stretch (polar residues) spans Ile-278–Pro-287. Basic and acidic residues predominate over residues Gly-307–Gln-316. Over residues Leu-323–Leu-336 the composition is skewed to low complexity. The span at Asp-342–Lys-363 shows a compositional bias: basic and acidic residues. Residues Lys-376–Lys-413 are compositionally biased toward polar residues. Ser-392 is modified (phosphoserine). Positions Leu-426–Lys-452 are enriched in basic and acidic residues. Thr-465 carries the phosphothreonine modification. Gly-670–Thr-677 serves as a coordination point for ATP.

The protein belongs to the DNA2/NAM7 helicase family. As to quaternary structure, interacts with the peptidyl release factors SUP35 and weakly with SUP45.

It is found in the cytoplasm. It carries out the reaction ATP + H2O = ADP + phosphate + H(+). In terms of biological role, probable RNA helicase, which may be involved in modulation of the translation termination process. Probably unwinds double-stranded RNA. In vitro, unwinds covalently closed, circular DNA in the presence of a DNA topoisomerase TOP1 and replication factor-A protein RFA1. This chain is Putative ATP-dependent RNA helicase ECM32 (ECM32), found in Saccharomyces cerevisiae (strain ATCC 204508 / S288c) (Baker's yeast).